A 410-amino-acid polypeptide reads, in one-letter code: Serine/threonine transporter SstT (410 aa).

10 consecutive transmembrane segments (helical) span residues 15-35, 49-69, 82-102, 118-138, 142-162, 190-210, 217-237, 299-319, 331-351, and 358-378; these read GSLVTQIMVGLVAGIALAWLS, FVNALKAVAPLLVLVLVISSI, PIVMLYLLSTFFAAVVAVVAS, IVPPSGILEVLHGLLMSMVTN, AVMKANYIGILVWAIGLGFAF, FAPVGIFGLVASILASTGFDA, LLGLLLGCMLLMALVFNPLLV, MAGASITITVLTLAAVHTLGI, LVASVCACGASGVAGGSLLLI, and FGIPNEIAMQVVAVGFIIGVL.

This sequence belongs to the dicarboxylate/amino acid:cation symporter (DAACS) (TC 2.A.23) family.

It localises to the cell inner membrane. The enzyme catalyses L-serine(in) + Na(+)(in) = L-serine(out) + Na(+)(out). The catalysed reaction is L-threonine(in) + Na(+)(in) = L-threonine(out) + Na(+)(out). Functionally, involved in the import of serine and threonine into the cell, with the concomitant import of sodium (symport system). The sequence is that of Serine/threonine transporter SstT from Erwinia tasmaniensis (strain DSM 17950 / CFBP 7177 / CIP 109463 / NCPPB 4357 / Et1/99).